Reading from the N-terminus, the 143-residue chain is Large ribosomal subunit protein uL13 (143 aa).

The protein belongs to the universal ribosomal protein uL13 family. As to quaternary structure, part of the 50S ribosomal subunit.

Functionally, this protein is one of the early assembly proteins of the 50S ribosomal subunit, although it is not seen to bind rRNA by itself. It is important during the early stages of 50S assembly. The chain is Large ribosomal subunit protein uL13 from Dehalococcoides mccartyi (strain ATCC BAA-2100 / JCM 16839 / KCTC 5957 / BAV1).